A 422-amino-acid polypeptide reads, in one-letter code: Dihydroorotase (422 aa).

Zn(2+)-binding residues include His57 and His59. Substrate contacts are provided by residues His59–Arg61 and Asn91. Zn(2+) is bound by residues Asp149, His176, and His229. Asn275 is a substrate binding site. Asp302 lines the Zn(2+) pocket. Asp302 is an active-site residue. Substrate is bound by residues His306 and Phe320 to Gly321.

It belongs to the metallo-dependent hydrolases superfamily. DHOase family. Class I DHOase subfamily. It depends on Zn(2+) as a cofactor.

It catalyses the reaction (S)-dihydroorotate + H2O = N-carbamoyl-L-aspartate + H(+). It participates in pyrimidine metabolism; UMP biosynthesis via de novo pathway; (S)-dihydroorotate from bicarbonate: step 3/3. Functionally, catalyzes the reversible cyclization of carbamoyl aspartate to dihydroorotate. This chain is Dihydroorotase, found in Endomicrobium trichonymphae.